A 539-amino-acid chain; its full sequence is M protein, serotype 24 (539 aa).

The signal sequence occupies residues 1 to 42 (MTKNNTNRHYSLRKLKTGTASVAVALTVLGAGLVVNTNEVSA). One copy of the A-1 repeat lies at 118-152 (LEARKADLEKALEGAMNFSTADSAKIKTLEAEKAA). Residues 118 to 301 (LEARKADLEK…ALEAEKADLE (184 aa)) are 5.3 X 35 AA tandem repeats, A-type. One copy of the A-2 repeat lies at 153-187 (LAARKADLEKALEGAMNFSTADSAKIKTLEAEKAA). One copy of the A-3 repeat lies at 188 to 222 (LEARQAELEKALEGAMNFSTADSAKIKTLEAEKAA). The A-4 repeat unit spans residues 223–257 (LAARKADLEKALEGAMNFSTADSAKIKTLEAEKAA). The A-5 repeat unit spans residues 258–292 (LEARQAELEKALEGAMNFSTADSAKIKTLEAEKAA). The A-6; truncated repeat unit spans residues 293–297 (LEAEK). The interval 297 to 401 (KADLEHQSQV…REAKKQVEKA (105 aa)) is disordered. C repeat units lie at residues 298–332 (ADLE…EAEH), 333–367 (QKLE…EAEH), and 368–402 (QKLE…EKAL). Over residues 303-312 (QSQVLNANRQ) the composition is skewed to polar residues. Basic and acidic residues-rich tracts occupy residues 314 to 340 (LRRD…EQNK), 349 to 375 (LRRD…EQNK), and 384 to 401 (LRRD…VEKA). D repeat units lie at residues 435–440 (AKLEAE), 441–446 (AKALKE), 449–454 (AKQAEE), and 456–461 (AKLRAG). Residues 456 to 511 (AKLRAGKASDSQTPDAKPGNKAVPGKGQAPQAGTKPNQNKAPMKETKRQLPSTGET) are disordered. The LPXTG sorting signal signature appears at 505–509 (LPSTG). Thr-508 carries the post-translational modification Pentaglycyl murein peptidoglycan amidated threonine. Positions 509-539 (GETANPFFTAAALTVMATAGVAAVVKRKEEN) are cleaved as a propeptide — removed by sortase.

The protein belongs to the M protein family.

It localises to the secreted. It is found in the cell wall. In terms of biological role, this protein is one of the different antigenic serotypes of protein M. Protein M is closely associated with virulence of the bacterium and can render the organism resistant to phagocytosis. This chain is M protein, serotype 24 (emm24), found in Streptococcus pyogenes.